The sequence spans 337 residues: DNA-directed RNA polymerase subunit alpha (337 aa).

The segment at 1 to 233 is alpha N-terminal domain (alpha-NTD); that stretch reads MVREEVVGST…DLFIPFLHAE (233 aa). The alpha C-terminal domain (alpha-CTD) stretch occupies residues 265–337; it reads KEIALKCIFI…FAIDLPKNKF (73 aa).

The protein belongs to the RNA polymerase alpha chain family. In plastids the minimal PEP RNA polymerase catalytic core is composed of four subunits: alpha, beta, beta', and beta''. When a (nuclear-encoded) sigma factor is associated with the core the holoenzyme is formed, which can initiate transcription.

Its subcellular location is the plastid. It is found in the chloroplast. It carries out the reaction RNA(n) + a ribonucleoside 5'-triphosphate = RNA(n+1) + diphosphate. Functionally, DNA-dependent RNA polymerase catalyzes the transcription of DNA into RNA using the four ribonucleoside triphosphates as substrates. In Acorus calamus (Sweet flag), this protein is DNA-directed RNA polymerase subunit alpha.